Here is a 356-residue protein sequence, read N- to C-terminus: Mitogen-activated protein kinase PMK11 (356 aa).

Residues 24-312 (YDIQDVVGEG…VEEALKHPYL (289 aa)) form the Protein kinase domain. ATP-binding positions include 30–38 (VGEGAYGVV) and lysine 53.

It belongs to the protein kinase superfamily. CMGC Ser/Thr protein kinase family. MAP kinase subfamily. Mg(2+) is required as a cofactor. Phosphorylated by MST7.

The catalysed reaction is L-seryl-[protein] + ATP = O-phospho-L-seryl-[protein] + ADP + H(+). It carries out the reaction L-threonyl-[protein] + ATP = O-phospho-L-threonyl-[protein] + ADP + H(+). In terms of biological role, mitogen-activated protein kinase; part of the MST11-MST7-PMK1 MAP kinase (MAPK) cascade that is essential for appressorium formation, penetration and invasive growth. Central regulator of appressorium development that acts downstream of the cAMP signal. The MST11-MST7-PMK1 MAP kinase cascade transduces signals from the cell surface sensors MDB2 and SHO1 that recognize various surface signals such as surface hydrophobicity, cutin monomers, and rice leaf waxes. Regulates expression of secreted fungal effector proteins implicated of host immune defenses, preventing reactive oxygen species generation and excessive callose deposition at plasmodesmata. Furthermore, controls the hyphal constriction required for fungal growth from one rice cell to the neighboring cell, enabling host tissue colonization and blast disease. Targets downstream of the PMK1-MAPK pathway include transcription factor MST12 and pathogenicity-related genes GAS1 and GAS2, both of which are expressed during appressorium formation, even if regulation of MST12 is not associated with expression of GAS1 or GAS2. The polypeptide is Mitogen-activated protein kinase PMK11 (Pyricularia oryzae (strain 70-15 / ATCC MYA-4617 / FGSC 8958) (Rice blast fungus)).